Consider the following 312-residue polypeptide: MEIAVFGGGAWGRALAFAFGEKNEVKIISRRDLNEPLKKLNDALISKGSAPIEQVDLQRGLKAVLYVIAISVQHLREWFQNASLPKNAKVLIASKGIEVLNRAFVSEIAKDFIDPNSLCFLAGPSFAAEIIQGLPCALVIHSNNQALALEFANKTPSFIRAYAQQDIIGGEIAGAYKNVIAIAGGVCDGLKLGNSAKASLLSRGLVEMQRFGAFFGGKTETFLGLSGAGDLFLTANSILSRNYRVGLGLAQNKPLEVVLEELGEVAEGVKTTNAIVEIARKYGIYTPIASELALLLKGKSVLESMNDLIRRA.

Positions 11, 30, 31, and 95 each coordinate NADPH. Residues Lys95, Gly123, and Ser125 each coordinate sn-glycerol 3-phosphate. Ala127 is an NADPH binding site. Positions 177, 230, 240, 241, and 242 each coordinate sn-glycerol 3-phosphate. Lys177 (proton acceptor) is an active-site residue. An NADPH-binding site is contributed by Arg241. NADPH contacts are provided by Val265 and Glu267.

This sequence belongs to the NAD-dependent glycerol-3-phosphate dehydrogenase family.

It is found in the cytoplasm. The enzyme catalyses sn-glycerol 3-phosphate + NAD(+) = dihydroxyacetone phosphate + NADH + H(+). It carries out the reaction sn-glycerol 3-phosphate + NADP(+) = dihydroxyacetone phosphate + NADPH + H(+). It functions in the pathway membrane lipid metabolism; glycerophospholipid metabolism. Catalyzes the reduction of the glycolytic intermediate dihydroxyacetone phosphate (DHAP) to sn-glycerol 3-phosphate (G3P), the key precursor for phospholipid synthesis. In Helicobacter pylori (strain Shi470), this protein is Glycerol-3-phosphate dehydrogenase [NAD(P)+].